Reading from the N-terminus, the 119-residue chain is Large ribosomal subunit protein bL20 (119 aa).

Belongs to the bacterial ribosomal protein bL20 family.

In terms of biological role, binds directly to 23S ribosomal RNA and is necessary for the in vitro assembly process of the 50S ribosomal subunit. It is not involved in the protein synthesizing functions of that subunit. This is Large ribosomal subunit protein bL20 from Bradyrhizobium diazoefficiens (strain JCM 10833 / BCRC 13528 / IAM 13628 / NBRC 14792 / USDA 110).